The following is a 182-amino-acid chain: Protein Syd (182 aa).

The protein belongs to the Syd family.

The protein localises to the cell inner membrane. In terms of biological role, interacts with the SecY protein in vivo. May bind preferentially to an uncomplexed state of SecY, thus functioning either as a chelating agent for excess SecY in the cell or as a regulatory factor that negatively controls the translocase function. The polypeptide is Protein Syd (Aeromonas hydrophila subsp. hydrophila (strain ATCC 7966 / DSM 30187 / BCRC 13018 / CCUG 14551 / JCM 1027 / KCTC 2358 / NCIMB 9240 / NCTC 8049)).